Reading from the N-terminus, the 417-residue chain is NADH-quinone oxidoreductase subunit D (417 aa).

The protein belongs to the complex I 49 kDa subunit family. NDH-1 is composed of 14 different subunits. Subunits NuoB, C, D, E, F, and G constitute the peripheral sector of the complex.

Its subcellular location is the cell inner membrane. It carries out the reaction a quinone + NADH + 5 H(+)(in) = a quinol + NAD(+) + 4 H(+)(out). Functionally, NDH-1 shuttles electrons from NADH, via FMN and iron-sulfur (Fe-S) centers, to quinones in the respiratory chain. The immediate electron acceptor for the enzyme in this species is believed to be ubiquinone. Couples the redox reaction to proton translocation (for every two electrons transferred, four hydrogen ions are translocated across the cytoplasmic membrane), and thus conserves the redox energy in a proton gradient. The sequence is that of NADH-quinone oxidoreductase subunit D from Paraburkholderia xenovorans (strain LB400).